Reading from the N-terminus, the 308-residue chain is UDP-3-O-acyl-N-acetylglucosamine deacetylase (308 aa).

Residues His-78, His-235, and Asp-239 each contribute to the Zn(2+) site. Residue His-262 is the Proton donor of the active site.

Belongs to the LpxC family. Zn(2+) is required as a cofactor.

It carries out the reaction a UDP-3-O-[(3R)-3-hydroxyacyl]-N-acetyl-alpha-D-glucosamine + H2O = a UDP-3-O-[(3R)-3-hydroxyacyl]-alpha-D-glucosamine + acetate. It participates in glycolipid biosynthesis; lipid IV(A) biosynthesis; lipid IV(A) from (3R)-3-hydroxytetradecanoyl-[acyl-carrier-protein] and UDP-N-acetyl-alpha-D-glucosamine: step 2/6. In terms of biological role, catalyzes the hydrolysis of UDP-3-O-myristoyl-N-acetylglucosamine to form UDP-3-O-myristoylglucosamine and acetate, the committed step in lipid A biosynthesis. The sequence is that of UDP-3-O-acyl-N-acetylglucosamine deacetylase from Anaeromyxobacter dehalogenans (strain 2CP-C).